Here is a 309-residue protein sequence, read N- to C-terminus: Elongation factor Ts (309 aa).

Residues 82–85 (TDFV) form an involved in Mg(2+) ion dislocation from EF-Tu region.

This sequence belongs to the EF-Ts family.

It localises to the cytoplasm. Associates with the EF-Tu.GDP complex and induces the exchange of GDP to GTP. It remains bound to the aminoacyl-tRNA.EF-Tu.GTP complex up to the GTP hydrolysis stage on the ribosome. This is Elongation factor Ts from Rickettsia rickettsii (strain Iowa).